Consider the following 432-residue polypeptide: Acyl-coenzyme A thioesterase 3 (432 aa).

Active-site charge relay system residues include Ser-243, Asp-337, and His-371. Residues 430–432 carry the Microbody targeting signal motif; it reads AKL.

This sequence belongs to the C/M/P thioester hydrolase family. Widely expressed. Highly expressed in the kidney, expressed at low level in the liver. Isoform 2 is expressed in the kidney, but not in the liver. Isoform 1 is liver-specific. Highly expressed in kidney (at protein level).

Its subcellular location is the peroxisome. It carries out the reaction hexadecanoyl-CoA + H2O = hexadecanoate + CoA + H(+). The enzyme catalyses decanoyl-CoA + H2O = decanoate + CoA + H(+). The catalysed reaction is dodecanoyl-CoA + H2O = dodecanoate + CoA + H(+). It catalyses the reaction tetradecanoyl-CoA + H2O = tetradecanoate + CoA + H(+). It carries out the reaction octadecanoyl-CoA + H2O = octadecanoate + CoA + H(+). The enzyme catalyses eicosanoyl-CoA + H2O = eicosanoate + CoA + H(+). The catalysed reaction is (9Z)-octadecenoyl-CoA + H2O = (9Z)-octadecenoate + CoA + H(+). It catalyses the reaction (9Z,12Z)-octadecadienoyl-CoA + H2O = (9Z,12Z)-octadecadienoate + CoA + H(+). It carries out the reaction (5Z,8Z,11Z,14Z)-eicosatetraenoyl-CoA + H2O = (5Z,8Z,11Z,14Z)-eicosatetraenoate + CoA + H(+). The enzyme catalyses tetracosanoyl-CoA + H2O = tetracosanoate + CoA + H(+). The catalysed reaction is hexacosanoyl-CoA + H2O = hexacosanoate + CoA + H(+). It catalyses the reaction docosanoyl-CoA + H2O = docosanoate + CoA + H(+). It carries out the reaction (9Z)-hexadecenoyl-CoA + H2O = (9Z)-hexadecenoate + CoA + H(+). Its pathway is lipid metabolism; fatty acid metabolism. Catalyzes the hydrolysis of acyl-CoAs into free fatty acids and coenzyme A (CoASH), regulating their respective intracellular levels. Mainly active on long-chain acyl-CoAs. May have a function in termination of beta-oxidation of fatty acids. This is Acyl-coenzyme A thioesterase 3 (Acot3) from Mus musculus (Mouse).